Consider the following 282-residue polypeptide: Elongation factor Ts (282 aa).

Residues 79-82 (TDFV) form an involved in Mg(2+) ion dislocation from EF-Tu region.

Belongs to the EF-Ts family.

Its subcellular location is the cytoplasm. Functionally, associates with the EF-Tu.GDP complex and induces the exchange of GDP to GTP. It remains bound to the aminoacyl-tRNA.EF-Tu.GTP complex up to the GTP hydrolysis stage on the ribosome. This Shewanella sediminis (strain HAW-EB3) protein is Elongation factor Ts.